The primary structure comprises 97 residues: Co-chaperonin GroES (97 aa).

The protein belongs to the GroES chaperonin family. As to quaternary structure, heptamer of 7 subunits arranged in a ring. Interacts with the chaperonin GroEL.

It is found in the cytoplasm. Functionally, together with the chaperonin GroEL, plays an essential role in assisting protein folding. The GroEL-GroES system forms a nano-cage that allows encapsulation of the non-native substrate proteins and provides a physical environment optimized to promote and accelerate protein folding. GroES binds to the apical surface of the GroEL ring, thereby capping the opening of the GroEL channel. The protein is Co-chaperonin GroES of Oleispira antarctica.